Reading from the N-terminus, the 282-residue chain is Ribosomal RNA small subunit methyltransferase I (282 aa).

The protein belongs to the methyltransferase superfamily. RsmI family.

Its subcellular location is the cytoplasm. The catalysed reaction is cytidine(1402) in 16S rRNA + S-adenosyl-L-methionine = 2'-O-methylcytidine(1402) in 16S rRNA + S-adenosyl-L-homocysteine + H(+). Its function is as follows. Catalyzes the 2'-O-methylation of the ribose of cytidine 1402 (C1402) in 16S rRNA. The polypeptide is Ribosomal RNA small subunit methyltransferase I (Pseudomonas aeruginosa (strain ATCC 15692 / DSM 22644 / CIP 104116 / JCM 14847 / LMG 12228 / 1C / PRS 101 / PAO1)).